We begin with the raw amino-acid sequence, 78 residues long: Small ribosomal subunit protein bS18 (78 aa).

The protein belongs to the bacterial ribosomal protein bS18 family. As to quaternary structure, part of the 30S ribosomal subunit. Forms a tight heterodimer with protein bS6.

In terms of biological role, binds as a heterodimer with protein bS6 to the central domain of the 16S rRNA, where it helps stabilize the platform of the 30S subunit. The protein is Small ribosomal subunit protein bS18 of Limosilactobacillus reuteri (strain DSM 20016) (Lactobacillus reuteri).